We begin with the raw amino-acid sequence, 311 residues long: Lipoyl synthase (311 aa).

Residues Cys-47, Cys-52, Cys-58, Cys-73, Cys-77, Cys-80, and Ser-286 each coordinate [4Fe-4S] cluster. In terms of domain architecture, Radical SAM core spans 59–276 (WSRHTATYLA…RSVGESLGLF (218 aa)).

It belongs to the radical SAM superfamily. Lipoyl synthase family. [4Fe-4S] cluster is required as a cofactor.

The protein localises to the cytoplasm. It carries out the reaction [[Fe-S] cluster scaffold protein carrying a second [4Fe-4S](2+) cluster] + N(6)-octanoyl-L-lysyl-[protein] + 2 oxidized [2Fe-2S]-[ferredoxin] + 2 S-adenosyl-L-methionine + 4 H(+) = [[Fe-S] cluster scaffold protein] + N(6)-[(R)-dihydrolipoyl]-L-lysyl-[protein] + 4 Fe(3+) + 2 hydrogen sulfide + 2 5'-deoxyadenosine + 2 L-methionine + 2 reduced [2Fe-2S]-[ferredoxin]. The protein operates within protein modification; protein lipoylation via endogenous pathway; protein N(6)-(lipoyl)lysine from octanoyl-[acyl-carrier-protein]: step 2/2. In terms of biological role, catalyzes the radical-mediated insertion of two sulfur atoms into the C-6 and C-8 positions of the octanoyl moiety bound to the lipoyl domains of lipoate-dependent enzymes, thereby converting the octanoylated domains into lipoylated derivatives. The chain is Lipoyl synthase from Chlamydia trachomatis serovar L2 (strain ATCC VR-902B / DSM 19102 / 434/Bu).